Here is a 588-residue protein sequence, read N- to C-terminus: MNATQEQLKIKLEQALVAAFGDEYAGVDPILVSASNPKFGDYQANVALSLSKKLGQQPRAIASAIVEKLDVSEICEKPEIAGPGFINLKLKTAYLEAQLNTIQADTRLGVPTAKHPQREIVDFSSPNIAKEMHVGHLRSTIIGDSIARILEFRGHDVLRLNHVGDWGTQFGMLITYLREVSPEALTTANALDIGDLVSFYRQAKQRFDADEAFQETARQEVVRLQAGAADTLHAWKLLCEQSRQEFQVIYDLLDVKLTERGESFYNPLLPTVVENLEKSGLLVENQGAKCVFLDGFTNREGEPLPLIVQKSDGGYNYATTDLAALRYRIQKDEAKRIIYITDAGQANHFAQFFQVARKAGWIPDDVELVHVPFGLVLGEDGKKFKTRSGDTVRLRDLLDEAISRAHADVEVRLKAEEREETAEFIDKVAEVVGISAVKYADLSQNRTSNYIFSYDKMLDLKGNTAPYMLYAYARIQGISRKGEINFADLGDNAKVILQHETEFALAKYLLQLGEVISTVEEDLSPNRLCEYLYELSKRFNAFYDRNQGVQVLSAEEPLRTSRLVLCDLTARTLKLGLSLLGIQVLERM.

Positions 126–136 (PNIAKEMHVGH) match the 'HIGH' region motif.

Belongs to the class-I aminoacyl-tRNA synthetase family. As to quaternary structure, monomer.

The protein localises to the cytoplasm. It catalyses the reaction tRNA(Arg) + L-arginine + ATP = L-arginyl-tRNA(Arg) + AMP + diphosphate. In Nostoc sp. (strain PCC 7120 / SAG 25.82 / UTEX 2576), this protein is Arginine--tRNA ligase.